A 27-amino-acid chain; its full sequence is Trichocyst matrix protein T4-C (27 aa).

The protein belongs to the TMP family.

It localises to the trichocyst. In terms of biological role, structural protein that crystallize inside the trichocyst matrix. The polypeptide is Trichocyst matrix protein T4-C (T4C) (Paramecium tetraurelia).